A 991-amino-acid polypeptide reads, in one-letter code: UvrABC system protein A (991 aa).

An ATP-binding site is contributed by 48 to 55 (GLSGSGKS). ABC transporter domains follow at residues 345–624 (WAKS…PKSL) and 644–972 (NHRR…KFLE). Residue 676 to 683 (GVSGGGKS) coordinates ATP. Residues 775 to 801 (CEACQGDGVIKIEMHFLPDVYVTCDVC) form a C4-type zinc finger.

This sequence belongs to the ABC transporter superfamily. UvrA family. Forms a heterotetramer with UvrB during the search for lesions.

The protein localises to the cytoplasm. The UvrABC repair system catalyzes the recognition and processing of DNA lesions. UvrA is an ATPase and a DNA-binding protein. A damage recognition complex composed of 2 UvrA and 2 UvrB subunits scans DNA for abnormalities. When the presence of a lesion has been verified by UvrB, the UvrA molecules dissociate. This Bradyrhizobium diazoefficiens (strain JCM 10833 / BCRC 13528 / IAM 13628 / NBRC 14792 / USDA 110) protein is UvrABC system protein A.